A 597-amino-acid polypeptide reads, in one-letter code: Probable HECT-type ubiquitin ligase-interacting protein creD (597 aa).

2 disordered regions span residues 375–398 and 432–499; these read ELDP…GTLS and LNIT…MATP. The segment covering 443 to 455 has biased composition (basic and acidic residues); the sequence is TDHESQNDSEHRR. The span at 465–481 shows a compositional bias: low complexity; it reads PSSGSNSHSPSSPVLSR. Residues 482 to 492 are compositionally biased toward basic and acidic residues; it reads RPSDEVDHEHV.

The protein belongs to the arrestin family. In terms of assembly, interacts with hulA.

In terms of biological role, component of the regulatory network controlling carbon source utilization through ubiquitination and deubiquitination involving creA, creB, creC, creD and acrB. May be involved in signaling by recognizing appropriately phosphorylated substrates via its arrestin domains and then recruit a HECT-type ubiquitin ligase such as hulA, leading to ubiquitination of the substrate, providing a link between ubiquitination and phosphorylation in protein regulation and stability. This Aspergillus oryzae (strain ATCC 42149 / RIB 40) (Yellow koji mold) protein is Probable HECT-type ubiquitin ligase-interacting protein creD (creD).